The sequence spans 790 residues: Polyribonucleotide nucleotidyltransferase (790 aa).

Positions 498 and 504 each coordinate Mg(2+). Residues 565-624 (PRILRIKIKPEQIGEVIGPGGRVIRAIQEQTGTKISIEEDGTVFISAANEDAARRAVREI) enclose the KH domain. Residues 634 to 702 (GEIFYGRVVT…PDGKINLSRK (69 aa)) enclose the S1 motif domain. Residues 710-790 (AERAATAQAP…KELLGEDEPN (81 aa)) form a disordered region. Residues 739–755 (PERRPGPPTPRRPEQRG) are compositionally biased toward basic and acidic residues. The span at 757 to 772 (SRPPRPQAQRSTPPPG) shows a compositional bias: pro residues.

It belongs to the polyribonucleotide nucleotidyltransferase family. Mg(2+) serves as cofactor.

The protein localises to the cytoplasm. The catalysed reaction is RNA(n+1) + phosphate = RNA(n) + a ribonucleoside 5'-diphosphate. Functionally, involved in mRNA degradation. Catalyzes the phosphorolysis of single-stranded polyribonucleotides processively in the 3'- to 5'-direction. This is Polyribonucleotide nucleotidyltransferase from Thermomicrobium roseum (strain ATCC 27502 / DSM 5159 / P-2).